The chain runs to 129 residues: Protein Turandot C (129 aa).

The N-terminal stretch at 1–21 (MNASISLLCLALLLISPFCLG) is a signal peptide.

It belongs to the Turandot family.

Its subcellular location is the secreted. Functionally, a humoral factor that may play a role in stress tolerance. This Drosophila melanogaster (Fruit fly) protein is Protein Turandot C.